Here is a 1063-residue protein sequence, read N- to C-terminus: Presequence protease, mitochondrial (1063 aa).

Residues 1 to 33 constitute a mitochondrion transit peptide; it reads MLRLANRVSRKDSGNLGIAQLKKRLLATSGVSQ. H105 serves as a coordination point for Zn(2+). E108 acts as the Proton acceptor in catalysis. Residue H109 coordinates Zn(2+). E181 is a catalytic residue. E206 contributes to the Zn(2+) binding site.

This sequence belongs to the peptidase M16 family. PreP subfamily. In terms of assembly, monomer and homodimer; homodimerization is induced by binding of the substrate. Zn(2+) serves as cofactor.

The protein resides in the mitochondrion intermembrane space. Its subcellular location is the mitochondrion matrix. Functionally, degrades mitochondrial transit peptides after their cleavage in the intermembrane space or in the matrix, and presequence peptides; clearance of these peptides is required to keep the presequence processing machinery running. Preferentially cleaves the N-terminal side of paired basic amino acid residues. Also degrades other unstructured peptides. May function as an ATP-dependent peptidase as opposed to a metalloendopeptidase. This Debaryomyces hansenii (strain ATCC 36239 / CBS 767 / BCRC 21394 / JCM 1990 / NBRC 0083 / IGC 2968) (Yeast) protein is Presequence protease, mitochondrial (CYM1).